Here is a 185-residue protein sequence, read N- to C-terminus: Elongation factor P (185 aa).

The protein belongs to the elongation factor P family.

It localises to the cytoplasm. It participates in protein biosynthesis; polypeptide chain elongation. Involved in peptide bond synthesis. Stimulates efficient translation and peptide-bond synthesis on native or reconstituted 70S ribosomes in vitro. Probably functions indirectly by altering the affinity of the ribosome for aminoacyl-tRNA, thus increasing their reactivity as acceptors for peptidyl transferase. This is Elongation factor P from Streptococcus pyogenes serotype M5 (strain Manfredo).